We begin with the raw amino-acid sequence, 207 residues long: Guanylate kinase (207 aa).

The 181-residue stretch at 4–184 (GILFIISAPS…AINDLRTIII (181 aa)) folds into the Guanylate kinase-like domain. 11–18 (APSGTGKS) is an ATP binding site.

The protein belongs to the guanylate kinase family.

The protein resides in the cytoplasm. The enzyme catalyses GMP + ATP = GDP + ADP. Its function is as follows. Essential for recycling GMP and indirectly, cGMP. The polypeptide is Guanylate kinase (Buchnera aphidicola subsp. Schizaphis graminum (strain Sg)).